A 126-amino-acid chain; its full sequence is Small ribosomal subunit protein uS13 (126 aa).

Positions 98 to 126 (PVRGQSTKNNARTRKGRKKTVANKKKATK) are disordered. Over residues 108–126 (ARTRKGRKKTVANKKKATK) the composition is skewed to basic residues.

It belongs to the universal ribosomal protein uS13 family. In terms of assembly, part of the 30S ribosomal subunit. Forms a loose heterodimer with protein S19. Forms two bridges to the 50S subunit in the 70S ribosome.

Located at the top of the head of the 30S subunit, it contacts several helices of the 16S rRNA. In the 70S ribosome it contacts the 23S rRNA (bridge B1a) and protein L5 of the 50S subunit (bridge B1b), connecting the 2 subunits; these bridges are implicated in subunit movement. Contacts the tRNAs in the A and P-sites. This is Small ribosomal subunit protein uS13 from Phocaeicola vulgatus (strain ATCC 8482 / DSM 1447 / JCM 5826 / CCUG 4940 / NBRC 14291 / NCTC 11154) (Bacteroides vulgatus).